The chain runs to 161 residues: Putative TRAP transporter small permease protein HI_1030 (161 aa).

4 consecutive transmembrane segments (helical) span residues Leu-13 to Val-33, Tyr-51 to Val-71, Ala-86 to Gly-106, and Ile-135 to Ile-155.

Belongs to the TRAP transporter small permease family.

The protein resides in the cell inner membrane. This Haemophilus influenzae (strain ATCC 51907 / DSM 11121 / KW20 / Rd) protein is Putative TRAP transporter small permease protein HI_1030.